We begin with the raw amino-acid sequence, 172 residues long: Glutamyl-tRNA(Gln) amidotransferase subunit C-3, mitochondrial (172 aa).

Positions 49 to 71 (KHPSKVPQRPNKSTIDGQSTPTR) are disordered. The segment covering 58 to 71 (PNKSTIDGQSTPTR) has biased composition (polar residues).

The protein belongs to the GatC family. Subunit of the heterotrimeric GatCAB amidotransferase (AdT) complex, composed of A, B and C subunits.

Its subcellular location is the mitochondrion. It carries out the reaction L-glutamyl-tRNA(Gln) + L-glutamine + ATP + H2O = L-glutaminyl-tRNA(Gln) + L-glutamate + ADP + phosphate + H(+). Its function is as follows. Allows the formation of correctly charged Gln-tRNA(Gln) through the transamidation of misacylated Glu-tRNA(Gln) in the mitochondria. The reaction takes place in the presence of glutamine and ATP through an activated gamma-phospho-Glu-tRNA(Gln). The polypeptide is Glutamyl-tRNA(Gln) amidotransferase subunit C-3, mitochondrial (Culex quinquefasciatus (Southern house mosquito)).